The sequence spans 188 residues: Mitochondrial import receptor subunit TOM20-1 (188 aa).

Residues 1–164 (MDKLNFFEEI…VVKNKKSSDE (164 aa)) lie on the Cytoplasmic side of the membrane. A helical transmembrane segment spans residues 165-182 (KYIVMGWVILAIGVVACI). The Mitochondrial intermembrane portion of the chain corresponds to 183-188 (SFRKLR).

It belongs to the Tom20 family. As to quaternary structure, forms part of the preprotein translocase complex of the outer mitochondrial membrane (TOM complex) which consists of at least 6 different proteins (TOM5, TOM6, TOM7, TOM20, TOM22/TOM9 and TOM40). Component of a mitochondrial large protein complex that contains, at least, MIC60, DGS1, TOM40, TOM20 proteins, and petC/RISP. As to expression, barely detected in roots.

Its subcellular location is the mitochondrion outer membrane. Central component of the receptor complex responsible for the recognition and translocation of cytosolically synthesized mitochondrial preproteins. Together with TOM22 functions as the transit peptide receptor at the surface of the mitochondrion outer membrane and facilitates the movement of preproteins into the translocation pore. This chain is Mitochondrial import receptor subunit TOM20-1, found in Arabidopsis thaliana (Mouse-ear cress).